Here is a 1031-residue protein sequence, read N- to C-terminus: Error-prone DNA polymerase (1031 aa).

Belongs to the DNA polymerase type-C family. DnaE2 subfamily.

It localises to the cytoplasm. The catalysed reaction is DNA(n) + a 2'-deoxyribonucleoside 5'-triphosphate = DNA(n+1) + diphosphate. Functionally, DNA polymerase involved in damage-induced mutagenesis and translesion synthesis (TLS). It is not the major replicative DNA polymerase. This chain is Error-prone DNA polymerase, found in Pseudomonas savastanoi pv. phaseolicola (strain 1448A / Race 6) (Pseudomonas syringae pv. phaseolicola (strain 1448A / Race 6)).